The primary structure comprises 185 residues: Prenylated Rab acceptor protein 1 (185 aa).

Residues 1–78 are Cytoplasmic-facing; sequence MAAQKDQQKD…RNVEYYQSNY (78 aa). Residues 30 to 54 form a required for interaction with prenylated RAB3A and VAMP2 region; the sequence is AGREWLERRRATIRPWGSFVDQRRF. 2 consecutive transmembrane segments (helical) span residues 79–94 and 95–112; these read VFVF…VTSP and MLLV…ILYL. Residues 113–131 lie on the Cytoplasmic side of the membrane; that stretch reads RTLQSKFVLFGREVSPAHQ. Helical transmembrane passes span 132-148 and 149-165; these read YALA…LAGA and GSAV…VIGS. The segment at 165-185 is required for interaction with GDI1; the sequence is SHAAFHQIEAVDGEELQMEPV. Topologically, residues 166–185 are cytoplasmic; sequence HAAFHQIEAVDGEELQMEPV. The required for interaction with prenylated RAB3A and VAMP2 stretch occupies residues 175–185; sequence VDGEELQMEPV. The segment at 175-185 is homodimerization; it reads VDGEELQMEPV.

The protein belongs to the PRA1 family. Homodimer. Interacts with VAMP2 (synaptobrevin-2), prenylated Rab proteins, GDI1, NRDG1 and PCLO.

Its subcellular location is the cell membrane. The protein localises to the cytoplasm. It is found in the golgi apparatus. It localises to the cytoplasmic vesicle. The protein resides in the secretory vesicle. Its subcellular location is the synaptic vesicle. Functionally, general Rab protein regulator required for vesicle formation from the Golgi complex. May control vesicle docking and fusion by mediating the action of Rab GTPases to the SNARE complexes. In addition it inhibits the removal of Rab GTPases from the membrane by GDI1. This Sus scrofa (Pig) protein is Prenylated Rab acceptor protein 1 (RABAC1).